A 163-amino-acid polypeptide reads, in one-letter code: Large ribosomal subunit protein uL15 (163 aa).

Gly residues predominate over residues 27–37; it reads SGLGKTAGRGQ. The interval 27-46 is disordered; that stretch reads SGLGKTAGRGQKGQKSRSGV.

It belongs to the universal ribosomal protein uL15 family. Part of the 50S ribosomal subunit.

Binds to the 23S rRNA. This is Large ribosomal subunit protein uL15 from Zymomonas mobilis subsp. mobilis (strain ATCC 31821 / ZM4 / CP4).